A 95-amino-acid polypeptide reads, in one-letter code: UPF0358 protein BCG9842_B1188 (95 aa).

The protein belongs to the UPF0358 family.

The sequence is that of UPF0358 protein BCG9842_B1188 from Bacillus cereus (strain G9842).